Here is a 322-residue protein sequence, read N- to C-terminus: tRNA-modifying protein YgfZ (322 aa).

W182 serves as a coordination point for folate.

The protein belongs to the tRNA-modifying YgfZ family.

Its subcellular location is the cytoplasm. Functionally, folate-binding protein involved in regulating the level of ATP-DnaA and in the modification of some tRNAs. It is probably a key factor in regulatory networks that act via tRNA modification, such as initiation of chromosomal replication. This Vibrio campbellii (strain ATCC BAA-1116) protein is tRNA-modifying protein YgfZ.